A 133-amino-acid chain; its full sequence is ATP synthase epsilon chain, chloroplastic (133 aa).

The protein belongs to the ATPase epsilon chain family. As to quaternary structure, F-type ATPases have 2 components, CF(1) - the catalytic core - and CF(0) - the membrane proton channel. CF(1) has five subunits: alpha(3), beta(3), gamma(1), delta(1), epsilon(1). CF(0) has three main subunits: a, b and c.

It is found in the plastid. The protein localises to the chloroplast thylakoid membrane. Its function is as follows. Produces ATP from ADP in the presence of a proton gradient across the membrane. This is ATP synthase epsilon chain, chloroplastic from Daucus carota (Wild carrot).